The following is a 447-amino-acid chain: Neuronal acetylcholine receptor subunit alpha-10 (447 aa).

An N-terminal signal peptide occupies residues 1 to 24 (MGTRSHYLDLGFLLLLFLPAECLG). Over 25 to 237 (AEGRLAHKLF…FTLLLRRRAA (213 aa)) the chain is Extracellular. N-linked (GlcNAc...) asparagine glycosylation is found at Asn-40 and Asn-56. 2 disulfides stabilise this stretch: Cys-154–Cys-168 and Cys-218–Cys-219. 3 helical membrane-spanning segments follow: residues 238–258 (AYVC…PLAF), 268–288 (VSLG…LAES), and 302–322 (YMAT…IMNL). The Cytoplasmic segment spans residues 323–425 (HYCGPNAHPV…WKRLARVMDR (103 aa)). Residues 426 to 446 (FFLGIFFCMALVMSLIVLVQA) traverse the membrane as a helical segment.

This sequence belongs to the ligand-gated ion channel (TC 1.A.9) family. Acetylcholine receptor (TC 1.A.9.1) subfamily. Alpha-10/CHRNA10 sub-subfamily. As to quaternary structure, forms homo- or heterooligomeric channels in conjunction with CHRNA10. The native outer hair cell receptor may be composed of CHRNA9:CHRNA10 heterooligomers. Found in the stoichiometric form (CHRNA9)2:(CHRNA10)3. In terms of tissue distribution, expressed in the outer hair cells of the cochlea and the neurons of dorsal root ganglia.

It is found in the synaptic cell membrane. It localises to the cell membrane. The catalysed reaction is Ca(2+)(in) = Ca(2+)(out). It carries out the reaction Mg(2+)(in) = Mg(2+)(out). It catalyses the reaction K(+)(in) = K(+)(out). The enzyme catalyses Na(+)(in) = Na(+)(out). Activated by a myriad of ligands such as acetylcholine. AChR activity is inhibited by the antagonist alpha-conotoxins RgIA and GeXXA, small disulfide-constrained peptides from cone snails. Functionally, component of neuronal acetylcholine receptors (nAChRs) that function as pentameric, ligand-gated cation channels with high calcium permeability among other activities. nAChRs are excitatory neurotrasnmitter receptors formed by a collection of nAChR subunits known to mediate synaptic transmission in the nervous system and the neuromuscular junction. Each nAchR subunit confers differential attributes to channel properties, including activation, deactivation and desensitization kinetics, pH sensitivity, cation permeability, and binding to allosteric modulators. Forms heteropentamers with CHRNA9. Expressed in the inner ear, in sympathetic neurons and in other non-neuronal cells, such as skin keratinocytes and lymphocytes. nAChR formed by CHRNA9:CHRNA10 mediate central nervous system control of auditory and vestibular sensory processing. The channel is permeable to a range of divalent cations including calcium, the influx of which may activate a potassium current which hyperpolarizes the cell membrane. In the ear, mediates synaptic transmission between efferent olivocochlear fibers and hair cells of the cochlea, this may lead to a reduction in basilar membrane motion, altering the activity of auditory nerve fibers and reducing the range of dynamic hearing. This may protect against acoustic trauma. May also regulate keratinocyte adhesion. This chain is Neuronal acetylcholine receptor subunit alpha-10 (Chrna10), found in Rattus norvegicus (Rat).